The sequence spans 848 residues: DIS3-like exonuclease 2 (848 aa).

Residues 153 to 173 (KGDRNSGKTDNNSPNKTEKRC) form a disordered region. Mg(2+)-binding residues include Asp-345 and Asp-354.

The protein belongs to the RNR ribonuclease family. DIS3L2 subfamily. It depends on Mg(2+) as a cofactor. Mn(2+) serves as cofactor. Cleaved by caspase ced-3 in vitro.

The protein resides in the cytoplasm. Its subcellular location is the P-body. 3'-5'-exoribonuclease that specifically recognizes RNAs polyuridylated at their 3' end and mediates their degradation. Component of an exosome-independent RNA degradation pathway that mediates degradation of cytoplasmic mRNAs that have been deadenylated and subsequently uridylated at their 3'. In Caenorhabditis elegans, this protein is DIS3-like exonuclease 2.